Here is a 146-residue protein sequence, read N- to C-terminus: Actin-depolymerizing factor 6 (146 aa).

Ser13 bears the Phosphoserine mark. Positions 14–146 (GMGVADESKT…DLEVLRERAN (133 aa)) constitute an ADF-H domain.

Belongs to the actin-binding proteins ADF family. In terms of processing, phosphorylated. In terms of tissue distribution, expressed in vascular tissues of all organs.

It localises to the cytoplasm. The protein resides in the cytoskeleton. Functionally, actin-depolymerizing protein. Severs actin filaments (F-actin) and binds to actin monomers. The chain is Actin-depolymerizing factor 6 (ADF6) from Arabidopsis thaliana (Mouse-ear cress).